We begin with the raw amino-acid sequence, 304 residues long: MAATLRELRGRIRSAGSIKKITKAQELIATSRIGRAQARLDSARPYAFQITAMLTTLAAEAALDHPLLVERPEPKRAGVLVVSSDRGLCGAYNASIFRRAEELFSLLREQGKTPVLYSVGRKALNYYTFRNWDISGSWTGFSEQPQYENAAEIAETLVESFMRGTGGEDEGESDAESVDELHIVYTEFKSMLSQSAVAHRIAPMVVEYVEEPPEVRTLYSFEPDATTLFESLLPRYLTTRVYAALLESAASELASRQRAMKSATDNADDLIKALTLMANRERQAQITQEISEIVGGANALADAR.

It belongs to the ATPase gamma chain family. F-type ATPases have 2 components, CF(1) - the catalytic core - and CF(0) - the membrane proton channel. CF(1) has five subunits: alpha(3), beta(3), gamma(1), delta(1), epsilon(1). CF(0) has three main subunits: a, b and c.

It is found in the cell membrane. Its function is as follows. Produces ATP from ADP in the presence of a proton gradient across the membrane. The gamma chain is believed to be important in regulating ATPase activity and the flow of protons through the CF(0) complex. This Mycolicibacterium paratuberculosis (strain ATCC BAA-968 / K-10) (Mycobacterium paratuberculosis) protein is ATP synthase gamma chain.